Here is a 412-residue protein sequence, read N- to C-terminus: Aspartate kinase Ask_LysC (412 aa).

In terms of domain architecture, ACT spans 265 to 332 (LTIRGVPDTP…QGIAAEMGAR (68 aa)).

Belongs to the aspartokinase family.

Its subcellular location is the cytoplasm. It catalyses the reaction L-aspartate + ATP = 4-phospho-L-aspartate + ADP. It participates in amino-acid biosynthesis; L-lysine biosynthesis via DAP pathway; (S)-tetrahydrodipicolinate from L-aspartate: step 1/4. It functions in the pathway amino-acid biosynthesis; L-methionine biosynthesis via de novo pathway; L-homoserine from L-aspartate: step 1/3. The protein operates within amino-acid biosynthesis; L-threonine biosynthesis; L-threonine from L-aspartate: step 1/5. Allosterically and strongly feedback inhibited by tryptophan. Addition of lysine alone slightly enhances activity. The simultaneous addition of lysine and tryptophan leads to very strong feedback inhibition of the enzyme. The feedback control by tryptophan is reduced in the presence of the compatible solutes hydroxyectoine or ectoine. Functionally, involved in the biosynthesis of L-aspartate-beta-semialdehyde which is a central intermediate in the biosynthesis of different amino acids (L-lysine, L-methionine, L-threonine). Catalyzes the phosphorylation of the beta-carboxyl group of L-aspartate to yield 4-phospho-L-aspartate. The polypeptide is Aspartate kinase Ask_LysC (lysC) (Stutzerimonas stutzeri (strain A1501) (Pseudomonas stutzeri)).